The following is a 426-amino-acid chain: Anhydromevalonate phosphate decarboxylase (426 aa).

Residues asparagine 148 and glutamate 211 each coordinate Mn(2+). The active-site Proton acceptor is aspartate 255.

Belongs to the UbiD family. Requires prenylated FMN as cofactor. Mn(2+) serves as cofactor.

It catalyses the reaction (2E)-3-methyl-5-phosphooxypent-2-enoate + H(+) = isopentenyl phosphate + CO2. The protein operates within isoprenoid biosynthesis; isopentenyl diphosphate biosynthesis via mevalonate pathway. In terms of biological role, catalyzes the conversion of trans-anhydromevalonate 5-phosphate (tAHMP) into isopentenyl phosphate. Involved in the archaeal mevalonate (MVA) pathway, which provides fundamental precursors for isoprenoid biosynthesis, such as isopentenyl diphosphate (IPP) and dimethylallyl diphosphate (DMAPP). The polypeptide is Anhydromevalonate phosphate decarboxylase (Archaeoglobus fulgidus (strain ATCC 49558 / DSM 4304 / JCM 9628 / NBRC 100126 / VC-16)).